Consider the following 161-residue polypeptide: Peroxynitrite isomerase (161 aa).

The short motif at 17 to 23 (GSWVGRG) is the GXWXGXG element. A heme b-binding site is contributed by histidine 152.

The protein belongs to the nitrobindin family. In terms of assembly, homodimer. It depends on heme b as a cofactor.

It catalyses the reaction peroxynitrite = nitrate. It functions in the pathway nitrogen metabolism. Heme-binding protein able to scavenge peroxynitrite and to protect free L-tyrosine against peroxynitrite-mediated nitration, by acting as a peroxynitrite isomerase that converts peroxynitrite to nitrate. Therefore, this protein likely plays a role in peroxynitrite sensing and in the detoxification of reactive nitrogen and oxygen species (RNS and ROS, respectively). Is able to bind nitric oxide (NO) in vitro, but may act as a sensor of peroxynitrite levels in vivo. The polypeptide is Peroxynitrite isomerase (Mycobacterium leprae (strain TN)).